Here is a 203-residue protein sequence, read N- to C-terminus: Galactoside O-acetyltransferase (203 aa).

Substrate-binding residues include D17, S71, N85, and D93. N85 contributes to the acetyl-CoA binding site. H115 acts as the Proton donor/acceptor in catalysis. Residues S142, A160, 165–166 (TK), R180, and R183 contribute to the acetyl-CoA site.

It belongs to the transferase hexapeptide repeat family. In terms of assembly, homotrimer. The N-terminus of this protein is heterogeneous because the initiator methionine is only partially cleaved.

The protein resides in the cytoplasm. It catalyses the reaction a beta-D-galactoside + acetyl-CoA = a 6-acetyl-beta-D-galactoside + CoA. In terms of biological role, catalyzes the CoA-dependent transfer of an acetyl group to the 6-O-methyl position of a range of galactosides, glucosides, and lactosides. May assist cellular detoxification by acetylating non-metabolizable pyranosides, thereby preventing their reentry into the cell. In Escherichia coli (strain K12), this protein is Galactoside O-acetyltransferase (lacA).